The following is a 269-amino-acid chain: 5'-nucleotidase SurE (269 aa).

4 residues coordinate a divalent metal cation: aspartate 11, aspartate 12, serine 43, and asparagine 101.

It belongs to the SurE nucleotidase family. A divalent metal cation serves as cofactor.

It is found in the cytoplasm. It carries out the reaction a ribonucleoside 5'-phosphate + H2O = a ribonucleoside + phosphate. Nucleotidase that shows phosphatase activity on nucleoside 5'-monophosphates. The polypeptide is 5'-nucleotidase SurE (Prochlorococcus marinus (strain MIT 9303)).